We begin with the raw amino-acid sequence, 473 residues long: Adenosylhomocysteinase (473 aa).

Residues histidine 58 to glutamine 62, aspartate 135, and glutamate 197 contribute to the substrate site. Threonine 198–threonine 200 provides a ligand contact to NAD(+). Substrate is bound by residues lysine 227 and aspartate 231. Residues asparagine 232, valine 265, glutamate 284, asparagine 319, isoleucine 340–histidine 342, and asparagine 385 contribute to the NAD(+) site. Residue histidine 342 coordinates substrate. Histidine 392 provides a ligand contact to substrate. Residues lysine 467 and tyrosine 471 each contribute to the NAD(+) site.

This sequence belongs to the adenosylhomocysteinase family. In terms of assembly, homotetramer; dimer of dimers. NAD(+) serves as cofactor.

It localises to the cytoplasm. It catalyses the reaction S-adenosyl-L-homocysteine + H2O = L-homocysteine + adenosine. The protein operates within amino-acid biosynthesis; L-homocysteine biosynthesis; L-homocysteine from S-adenosyl-L-homocysteine: step 1/1. Its function is as follows. May play a key role in the regulation of the intracellular concentration of adenosylhomocysteine, which is a strong inhibitor of SAM-dependent methyltransferases. Catalyzes the hydrolysis of S-adenosyl-L-homocysteine into L-homocysteine and adenosine. The sequence is that of Adenosylhomocysteinase from Bradyrhizobium elkanii.